The primary structure comprises 1012 residues: Structural polyprotein (1012 aa).

A divalent metal cation is bound at residue Asp-30. The Peptidase S50 domain occupies 513-755; that stretch reads ADKGYEVVAN…AGRQYHLAMA (243 aa). The Nucleophile role is filled by Ser-652. Lys-692 is a catalytic residue. The segment at 969-1012 is disordered; that stretch reads AMELKHRNPRRAPPKPKPKPNAPTQRPPGRLGRWIRTVSDEDLE. Residues 975 to 986 are compositionally biased toward basic residues; sequence RNPRRAPPKPKP. The interval 1003-1012 is interaction with VP1 protein; that stretch reads IRTVSDEDLE.

In terms of assembly, homotrimer. A central divalent metal stabilizes the VP2 trimer. Interacts with host ITGA4/ITGB1. Homodimer. Interacts (via C-terminus) with VP1 in the cytoplasm. Interacts with VP2. Post-translationally, specific enzymatic cleavages yield mature proteins. The capsid assembly seems to be regulated by polyprotein processing. The protease VP4 cleaves itself off the polyprotein, thus releasing pre-VP2 and VP3 within the infected cell. During capsid assembly, the C-terminus of pre-VP2 is further processed by VP4, giving rise to VP2, the external capsid protein and three small peptides that all stay closely associated with the capsid.

Its subcellular location is the virion. It is found in the host cytoplasm. Its function is as follows. Capsid protein VP2 self assembles to form an icosahedral capsid with a T=13 symmetry, about 70 nm in diameter, and consisting of 260 VP2 trimers. The capsid encapsulates the genomic dsRNA. VP2 is also involved in attachment and entry into the host cell by interacting with host ITGA4/ITGB1. The precursor of VP2 plays an important role in capsid assembly. First, pre-VP2 and VP2 oligomers assemble to form a procapsid. Then, the pre-VP2 intermediates may be processed into VP2 proteins by proteolytic cleavage mediated by VP4 to obtain the mature virion. The final capsid is composed of pentamers and hexamers but VP2 has a natural tendency to assemble into all-pentameric structures. Therefore pre-VP2 may be required to allow formation of the hexameric structures. In terms of biological role, protease VP4 is a serine protease that cleaves the polyprotein into its final products. Pre-VP2 is first partially cleaved, and may be completely processed by VP4 upon capsid maturation. Functionally, capsid protein VP3 plays a key role in virion assembly by providing a scaffold for the capsid made of VP2. May self-assemble to form a T=4-like icosahedral inner-capsid composed of at least 180 trimers. Plays a role in genomic RNA packaging by recruiting VP1 into the capsid and interacting with the dsRNA genome segments to form a ribonucleoprotein complex. Additionally, the interaction of the VP3 C-terminal tail with VP1 removes the inherent structural blockade of the polymerase active site. Thus, VP3 can also function as a transcriptional activator. Its function is as follows. Structural peptide 1 is a small peptide derived from pre-VP2 C-terminus. It destabilizes and perforates cell membranes, suggesting a role during entry. Structural peptide 2 is a small peptide derived from pVP2 C-terminus. It is not essential for the virus viability, but viral growth is affected when missing. In terms of biological role, structural peptide 3 is a small peptide derived from pVP2 C-terminus. It is not essential for the virus viability, but viral growth is affected when missing. Functionally, structural peptide 4 is a small peptide derived from pVP2 C-terminus. It is essential for the virus viability. The chain is Structural polyprotein from Avian infectious bursal disease virus (strain STC) (IBDV).